The sequence spans 87 residues: uncharacterized protein (87 aa).

The chain crosses the membrane as a helical span at residues 25 to 47; it reads FFWEVCNMILFIIIALCGYLLFS.

Its subcellular location is the membrane. This is an uncharacterized protein from Bacillus subtilis (strain 168).